The sequence spans 259 residues: Tryptophan synthase alpha chain (259 aa).

Residues Glu48 and Asp59 each act as proton acceptor in the active site.

The protein belongs to the TrpA family. As to quaternary structure, tetramer of two alpha and two beta chains.

The catalysed reaction is (1S,2R)-1-C-(indol-3-yl)glycerol 3-phosphate + L-serine = D-glyceraldehyde 3-phosphate + L-tryptophan + H2O. It participates in amino-acid biosynthesis; L-tryptophan biosynthesis; L-tryptophan from chorismate: step 5/5. In terms of biological role, the alpha subunit is responsible for the aldol cleavage of indoleglycerol phosphate to indole and glyceraldehyde 3-phosphate. This chain is Tryptophan synthase alpha chain, found in Syntrophomonas wolfei subsp. wolfei (strain DSM 2245B / Goettingen).